The chain runs to 164 residues: Lipoprotein signal peptidase (164 aa).

The next 3 membrane-spanning stretches (helical) occupy residues 12 to 32 (WLWL…LILQ), 70 to 90 (WFFA…MYRL), and 102 to 122 (ALII…GFVV). Active-site residues include Asp123 and Asp141. Residues 137 to 157 (FNLADTAICVGAALIVLEGFL) traverse the membrane as a helical segment.

It belongs to the peptidase A8 family.

The protein resides in the cell inner membrane. It carries out the reaction Release of signal peptides from bacterial membrane prolipoproteins. Hydrolyzes -Xaa-Yaa-Zaa-|-(S,diacylglyceryl)Cys-, in which Xaa is hydrophobic (preferably Leu), and Yaa (Ala or Ser) and Zaa (Gly or Ala) have small, neutral side chains.. The protein operates within protein modification; lipoprotein biosynthesis (signal peptide cleavage). Functionally, this protein specifically catalyzes the removal of signal peptides from prolipoproteins. This Shigella boydii serotype 4 (strain Sb227) protein is Lipoprotein signal peptidase.